The primary structure comprises 391 residues: Period circadian protein (391 aa).

4 disordered regions span residues 27 to 121 (VTAP…PPVT), 163 to 188 (MLEYSGPGPGHGHGIKRGGSHSWEGE), 241 to 270 (GSSAGGNGSGTGNNNGNGNNNQPTTNQFTQ), and 328 to 357 (SPSGTSPNPNRPHKHAHVHSSSEKPSTSQA). Residues 93 to 114 (GTSGTGNSGDGGGGGGADGPGS) are compositionally biased toward gly residues. The segment covering 241–255 (GSSAGGNGSGTGNNN) has biased composition (gly residues).

In terms of assembly, forms a heterodimer with timeless (TIM); the complex then translocates into the nucleus. In terms of processing, phosphorylated with a circadian rhythmicity, probably by the double-time protein (dbt). Phosphorylation could be implicated in the stability of per monomer and in the formation of heterodimer per-tim.

It is found in the nucleus. It localises to the cytoplasm. Its subcellular location is the perinuclear region. In terms of biological role, essential for biological clock functions. Determines the period length of circadian and ultradian rhythms; an increase in PER dosage leads to shortened circadian rhythms and a decrease leads to lengthened circadian rhythms. Essential for the circadian rhythmicity of locomotor activity, eclosion behavior, and for the rhythmic component of the male courtship song that originates in the thoracic nervous system. The biological cycle depends on the rhythmic formation and nuclear localization of the TIM-PER complex. Light induces the degradation of TIM, which promotes elimination of PER. Nuclear activity of the heterodimer coordinatively regulates PER and TIM transcription through a negative feedback loop. Behaves as a negative element in circadian transcriptional loop. Does not appear to bind DNA, suggesting indirect transcriptional inhibition. This chain is Period circadian protein (per), found in Drosophila insularis (Fruit fly).